Reading from the N-terminus, the 156-residue chain is Small ribosomal subunit protein uS7 (156 aa).

Belongs to the universal ribosomal protein uS7 family. As to quaternary structure, part of the 30S ribosomal subunit. Contacts proteins S9 and S11.

In terms of biological role, one of the primary rRNA binding proteins, it binds directly to 16S rRNA where it nucleates assembly of the head domain of the 30S subunit. Is located at the subunit interface close to the decoding center, probably blocks exit of the E-site tRNA. This Synechococcus sp. (strain CC9605) protein is Small ribosomal subunit protein uS7.